Reading from the N-terminus, the 496-residue chain is Alanine aminotransferase 1 (496 aa).

At Ala-2 the chain carries N-acetylalanine. Thr-22 carries the post-translational modification Phosphothreonine. An N6-(pyridoxal phosphate)lysine modification is found at Lys-314.

It belongs to the class-I pyridoxal-phosphate-dependent aminotransferase family. Alanine aminotransferase subfamily. In terms of assembly, homodimer. It depends on pyridoxal 5'-phosphate as a cofactor. As to expression, liver, heart, skeletal muscle, etc.

It localises to the cytoplasm. It carries out the reaction L-alanine + 2-oxoglutarate = pyruvate + L-glutamate. It functions in the pathway amino-acid degradation; L-alanine degradation via transaminase pathway; pyruvate from L-alanine: step 1/1. Functionally, catalyzes the reversible transamination between alanine and 2-oxoglutarate to form pyruvate and glutamate. Participates in cellular nitrogen metabolism and also in liver gluconeogenesis starting with precursors transported from skeletal muscles. This is Alanine aminotransferase 1 (Gpt) from Rattus norvegicus (Rat).